A 287-amino-acid chain; its full sequence is Oxaloacetate decarboxylase (287 aa).

Residue serine 50 participates in substrate binding. Residue aspartate 88 coordinates Mg(2+). 2 residues coordinate substrate: arginine 159 and histidine 235.

It belongs to the isocitrate lyase/PEP mutase superfamily. Oxaloacetate decarboxylase family. Homotetramer; dimer of dimers. Mg(2+) serves as cofactor.

The catalysed reaction is oxaloacetate + H(+) = pyruvate + CO2. Functionally, catalyzes the decarboxylation of oxaloacetate into pyruvate. Seems to play a role in maintaining cellular concentrations of bicarbonate and pyruvate. In Chromohalobacter salexigens (strain ATCC BAA-138 / DSM 3043 / CIP 106854 / NCIMB 13768 / 1H11), this protein is Oxaloacetate decarboxylase.